The primary structure comprises 152 residues: Regulatory protein RecX (152 aa).

Belongs to the RecX family.

Its subcellular location is the cytoplasm. Modulates RecA activity. The polypeptide is Regulatory protein RecX (Chromohalobacter salexigens (strain ATCC BAA-138 / DSM 3043 / CIP 106854 / NCIMB 13768 / 1H11)).